The primary structure comprises 456 residues: Tyrosine phenol-lyase (456 aa).

Position 257 is an N6-(pyridoxal phosphate)lysine (Lys257).

Belongs to the beta-eliminating lyase family. As to quaternary structure, homotetramer. Pyridoxal 5'-phosphate serves as cofactor.

The enzyme catalyses L-tyrosine + H2O = phenol + pyruvate + NH4(+). The polypeptide is Tyrosine phenol-lyase (tpl) (Citrobacter intermedius (Escherichia intermedia)).